The sequence spans 315 residues: Fe(3+)-citrate-binding protein YfmC (315 aa).

The signal sequence occupies residues 1 to 18; the sequence is MRTYSNKLIAIMSVLLLA. Cysteine 19 carries N-palmitoyl cysteine lipidation. The S-diacylglycerol cysteine moiety is linked to residue cysteine 19. A compositionally biased stretch (low complexity) spans 27 to 36; sequence SSQNNNGSGK. A disordered region spans residues 27-52; it reads SSQNNNGSGKSESKDSRVIHDEEGKT. Positions 37–51 are enriched in basic and acidic residues; sequence SESKDSRVIHDEEGK. In terms of domain architecture, Fe/B12 periplasmic-binding spans 60-315; sequence RVVVLELSFL…KDVLKKVYNK (256 aa).

It belongs to the bacterial solute-binding protein 8 family. In terms of assembly, the complex is composed of one ATP-binding protein (YfmF), two transmembrane proteins (YfmD and YfmE) and a solute-binding protein (YfmC).

It localises to the cell membrane. Part of the ABC transporter complex YfmCDEF involved in citrate-dependent Fe(3+) import. Binds citrate-dependent Fe(3+) and delivers it to the surface of YfmDE. The chain is Fe(3+)-citrate-binding protein YfmC (yfmC) from Bacillus subtilis (strain 168).